A 307-amino-acid polypeptide reads, in one-letter code: Mitochondrial thiamine pyrophosphate carrier 1 (307 aa).

3 Solcar repeats span residues 13–95 (VSTT…IGSF), 105–190 (SPQL…IKIF), and 203–305 (PFTL…FMNK). Transmembrane regions (helical) follow at residues 19-36 (LVAG…IAPL), 76-96 (IMYI…GSFL), 108-126 (LYSC…LASY), 160-184 (MGFF…FGVY), 210-226 (LAGP…TFPL), and 280-297 (GVTM…ISLW).

This sequence belongs to the mitochondrial carrier (TC 2.A.29) family.

The protein localises to the mitochondrion inner membrane. Its function is as follows. Mitochondrial transporter that mediates uptake of thiamine pyrophosphate (ThPP) into mitochondria. This chain is Mitochondrial thiamine pyrophosphate carrier 1 (TPC1), found in Candida glabrata (strain ATCC 2001 / BCRC 20586 / JCM 3761 / NBRC 0622 / NRRL Y-65 / CBS 138) (Yeast).